Consider the following 351-residue polypeptide: (S)-coclaurine N-methyltransferase (351 aa).

Residues 91 to 92 (QS), 126 to 134 (VLDLGCGLG), 130 to 132 (GCG), and 153 to 158 (TSSVEQ) each bind S-adenosyl-L-methionine. C326 is an active-site residue.

Belongs to the CFA/CMAS family. As to expression, expressed in roots, stems, flower buds and at lower levels, in leaves. Restricted to sieve elements of the phloem adjacent or proximal to laticifers.

The protein localises to the cytoplasm. It catalyses the reaction (S)-coclaurine + S-adenosyl-L-methionine = (S)-N-methylcoclaurine + S-adenosyl-L-homocysteine + H(+). It functions in the pathway alkaloid biosynthesis; (S)-reticuline biosynthesis; (S)-reticuline from (S)-norcoclaurine: step 2/4. Its function is as follows. Involved in the biosynthesis of benzylisoquinoline alkaloids. N-methyltransferase methylating (S)-coclaurine. 4'-O-methylcoclaurine and norlaudanine can also be used as substrates. The sequence is that of (S)-coclaurine N-methyltransferase from Papaver somniferum (Opium poppy).